Here is a 372-residue protein sequence, read N- to C-terminus: MAAPAREPALRCCIRLARVFLLLVLACEVAGSDEAEAREGAASLAGSCGCGTPQRAGAHGSSAAAQRYSREANAPGLTSGPRPLALTKMVPIPAGVFTMGTDDPQIRQDGEAPARRVTVDGFYMDAYEVSNADFEKFVNSTGYLTEAEKFGDSFVFEGMLSEQVKTHIHQAVAAAPWWLPVKGANWRHPEGPDSSILHRSNHPVLHVSWNDAVAYCTWAGKRLPTEAEWEYSCRGGLQNRLFPWGNKLQPKGQHYANIWQGKFPVSNTGEDGFQGTAPVDAFPPNGYGLYNIVGNVWEWTSDWWTVHHSVEETFNPKGPTSGKDRVKKGGSYMCHKSYCYRYRCAARSQNTPDSSASNLGFRCAADHLPTAD.

An N-terminal signal peptide occupies residues 1–31 (MAAPAREPALRCCIRLARVFLLLVLACEVAG). Residues Cys48 and Cys50 are joined by a disulfide bond. Positions 61–80 (SSAAAQRYSREANAPGLTSG) are disordered. A Ca(2+)-binding site is contributed by Glu128. N-linked (GlcNAc...) asparagine glycosylation occurs at Asn139. Disulfide bonds link Cys216–Cys363 and Cys233–Cys344. Positions 257, 258, 271, 273, 291, 294, and 298 each coordinate Ca(2+). Cu(2+)-binding residues include Cys334 and Cys339. Residues 339–358 (CYRYRCAARSQNTPDSSASN) are interaction with sulfatases.

This sequence belongs to the sulfatase-modifying factor family. Monomer, homodimer and heterodimer with SUMF2. Requires Cu(2+) as cofactor. N-glycosylated. Contains high-mannose-type oligosaccharides.

It is found in the endoplasmic reticulum lumen. The catalysed reaction is L-cysteinyl-[sulfatase] + 2 a thiol + O2 = an organic disulfide + 3-oxo-L-alanyl-[sulfatase] + hydrogen sulfide + H2O + H(+). Its pathway is protein modification; sulfatase oxidation. Oxidase that catalyzes the conversion of cysteine to 3-oxoalanine on target proteins, using molecular oxygen and an unidentified reducing agent. 3-oxoalanine modification, which is also named formylglycine (fGly), occurs in the maturation of arylsulfatases and some alkaline phosphatases that use the hydrated form of 3-oxoalanine as a catalytic nucleophile. Known substrates include GALNS, ARSA, STS and ARSE. This is Formylglycine-generating enzyme from Mus musculus (Mouse).